We begin with the raw amino-acid sequence, 472 residues long: Adenylyl cyclase-associated protein 1 (472 aa).

N-acetylalanine is present on Ala-2. A Phosphotyrosine modification is found at Tyr-31. Ser-34 carries the phosphoserine modification. Lys-81 bears the N6-acetyllysine mark. Residues 216–253 are disordered; sequence ELSGLPSGPSAGSGPPPPPPGPPPPPVPTSSGSDDSAS. Residues 218–228 are compositionally biased toward low complexity; sequence SGLPSGPSAGS. Pro residues predominate over residues 229-243; it reads GPPPPPPGPPPPPVP. Over residues 244–253 the composition is skewed to low complexity; it reads TSSGSDDSAS. Position 287 is an N6-methyllysine (Lys-287). A phosphoserine mark is found at Ser-290, Ser-295, and Ser-301. The disordered stretch occupies residues 290–312; the sequence is SGLIRSGPKPFSASKPDPPKPVA. Residues 307 to 450 form the C-CAP/cofactor C-like domain; sequence PPKPVAKKEP…EGGDFNEFPV (144 aa). Lys-345 participates in a covalent cross-link: Glycyl lysine isopeptide (Lys-Gly) (interchain with G-Cter in SUMO1).

It belongs to the CAP family. Homodimer. Binds actin monomers.

It is found in the cell membrane. Its function is as follows. Directly regulates filament dynamics and has been implicated in a number of complex developmental and morphological processes, including mRNA localization and the establishment of cell polarity. The protein is Adenylyl cyclase-associated protein 1 (CAP1) of Bos taurus (Bovine).